A 384-amino-acid polypeptide reads, in one-letter code: BarH-like 2 homeobox protein (384 aa).

3 disordered regions span residues Met-1–Thr-134, Cys-154–Ser-237, and Pro-364–Arg-384. Over residues Gln-119 to Thr-134 the composition is skewed to low complexity. A compositionally biased stretch (basic and acidic residues) spans Glu-177–Ser-217. The segment at residues Pro-229–Thr-288 is a DNA-binding region (homeobox).

It belongs to the BAR homeobox family. As to expression, expressed in the ganglion cell layer of the retina in the eye and in the ventral zone of the dorsal thalamus of the CNS.

It is found in the nucleus. Potential regulator of neural basic helix-loop-helix genes. It may down-regulate expression of ASCL1 and, within the thalamus, up-regulate NGN2, thereby regulating distinct patterns of neuronal differentiation. The chain is BarH-like 2 homeobox protein (Barhl2) from Rattus norvegicus (Rat).